The chain runs to 2641 residues: CCR4-NOT transcription complex subunit let-711 (2641 aa).

Residues 660 to 664 (LSELL) carry the LXXLL motif. Disordered stretches follow at residues 771–887 (SGRS…QNAQ), 936–963 (TQRQ…PQQQ), 1197–1221 (EGGR…PAAA), 1518–1565 (QSKI…SQGA), and 2034–2054 (GMNN…AGLQ). Composition is skewed to low complexity over residues 774 to 795 (SSSV…QQQQ), 802 to 839 (LPPS…SQQQ), and 853 to 877 (PAQF…HMMG). Residues 951-960 (PQRPSGPPTP) are compositionally biased toward pro residues. Positions 1205-1221 (GSAQAGSASSTPTPAAA) are enriched in low complexity. A compositionally biased stretch (low complexity) spans 2034–2046 (GMNNAMNNGAGNA). An LXXLL motif is present at residues 2341-2345 (LRVLL). The tract at residues 2609-2641 (AQGSQPQAQPDGAPGPLGNNTGAANQQQNPNTN) is disordered.

It belongs to the CNOT1 family. Component of the CCR4-NOT complex at least composed of ccf-1, ccr-4 and let-711, which is required for germ cell development in hermaphrodites. Within the complex interacts with ccf-1 and ccr-4; the interactions are direct. Highly expressed in the germline of hermaphrodites.

Its subcellular location is the nucleus. In terms of biological role, scaffolding component of the CCR4-NOT complex which is one of the major cellular mRNA deadenylases and is linked to various cellular processes including bulk mRNA degradation, miRNA-mediated repression, translational repression during translational initiation and general transcription regulation. Positively regulates the accumulation of the CCR4-NOT complex component ccr-1. Within the complex promotes germ cell development and fertility in hermaphrodites. Additional complex functions may be a consequence of its influence on mRNA expression. Its scaffolding function implies its interaction with the catalytic complex module and diverse RNA-binding proteins mediating the complex recruitment to selected mRNA 3'UTRs. Mediates the recruitment of the CCR4-NOT complex to miRNA targets and to the RISC complex. Acts as a transcriptional repressor. Represses the ligand-dependent transcriptional activation by nuclear receptors. In embryos, plays a role in female pronucleus and mitotic spindle positioning during the first cleavage divisions after fertilization. This may partly be through negatively regulating the accumulation of zyg-9 at the centrosome. Negatively regulates the formation of long astral microtubules in developing embryos. Required for the stabilization and degradation of maternal mRNAs such as nos-2 in somatic blastomeres. This is CCR4-NOT transcription complex subunit let-711 from Caenorhabditis elegans.